Here is a 418-residue protein sequence, read N- to C-terminus: Thermolabile hemolysin (418 aa).

A signal peptide spans 1-19 (MMKKTITLLTALLPLASAV). Serine 153 serves as the catalytic Nucleophile. Active-site residues include aspartate 390 and histidine 393.

Belongs to the 'GDSL' lipolytic enzyme family. In terms of processing, there are two forms of LDH. The LDH(S) may be a protein in which 13 residues of the N-terminal of LDH(L) are deleted.

The protein localises to the secreted. Its function is as follows. Phospholipase hydrolyzing both fatty acid esters of phospholipid, i.e. it hydrolyzes phosphatidylcholine (PC) to lysophosphatidylcholine (LPC) and then LPC to glycerophosphorylcholine (GPC). The sequence is that of Thermolabile hemolysin from Vibrio parahaemolyticus serotype O3:K6 (strain RIMD 2210633).